Reading from the N-terminus, the 522-residue chain is Target of rapamycin complex 2 subunit MAPKAP1 (522 aa).

The tract at residues 2–184 (GFLDNPTIIL…KKIDVYLPLH (183 aa)) is interaction with MAP3K2. Residues 2 to 267 (GFLDNPTIIL…GFSTLALVEK (266 aa)) form an interaction with NBN region. The residue at position 86 (Thr86) is a Phosphothreonine. Phosphoserine is present on residues Ser128, Ser186, Ser315, and Ser356. Positions 139–267 (QSILSVRLEQ…GFSTLALVEK (129 aa)) constitute a CRIM domain. An SIN1-type RBD region spans residues 279-353 (LFVRINAAHG…QSAWEFCLVR (75 aa)). One can recognise an SIN1-type PH domain in the interval 382–487 (HYKSFKVSMI…IVLKVNYILE (106 aa)). A 1,2-diacyl-sn-glycero-3-phospho-(1D-myo-inositol-3,4,5-trisphosphate) is bound at residue Arg393. Thr398 carries the post-translational modification Phosphothreonine. Lys428 and Lys464 together coordinate a 1,2-diacyl-sn-glycero-3-phospho-(1D-myo-inositol-3,4,5-trisphosphate). The interaction with ATF2 stretch occupies residues 468–522 (FESDAATVNEIVLKVNYILESRASTARADYFAQKQRKLNRRTSFSFQKEKKSGQQ). Ser510 is modified (phosphoserine).

It belongs to the SIN1 family. Component of the mechanistic target of rapamycin complex 2 (mTORC2), consisting in two heterotretramers composed of MTOR, MLST8, RICTOR and MAPKAP1/SIN1. The mTORC2 core complex associates with PRR5/PROTOR1 and/or PRR5L/PROTOR2. Contrary to mTORC1, mTORC2 does not bind to and is not sensitive to FKBP12-rapamycin. Interacts with MAP3K2. Interacts with ATF2. Interacts with MAPK8. Interacts with GTP-bound HRAS and KRAS; inhibiting their activity. Interacts with IFNAR2. Phosphorylation at Ser-128 by PKC promotes relocalization to the perinuclear region, where the mTORC2 complex specifically mediates phosphorylation of SGK1. Phosphorylated at Thr-86 by AKT1 or RPS6KB1 in the presence of growth factors; the effect of this phosphorylation is however unclear. According to two studies, phosphorylation at Thr-86 by AKT1 is part of a positive feedback loop that increases mTORC2 activation. According to another study, phosphorylation at Thr-86 and Thr-398 by RPS6KB1 promotes dissociation from the mTORC2 complex, leading to inhibit mTORC2 signaling. In terms of tissue distribution, present in the lumenal epithelium and glandular epithelium of endometrium (at protein level).

It is found in the cell membrane. The protein localises to the cytoplasmic vesicle. The protein resides in the endoplasmic reticulum membrane. It localises to the early endosome membrane. Its subcellular location is the late endosome membrane. It is found in the lysosome membrane. The protein localises to the golgi apparatus membrane. The protein resides in the mitochondrion outer membrane. It localises to the cytoplasm. Its subcellular location is the perinuclear region. It is found in the nucleus. Phosphatidylinositol 3,4,5-trisphosphate (PI(3,4,5)P3) promotes MTOR activation by relieving MAPKAP1/SIN1-mediated inhibition of MTOR that takes place in absence of PI(3,4,5)P3. Functionally, component of the mechanistic target of rapamycin complex 2 (mTORC2), which transduces signals from growth factors to pathways involved in proliferation, cytoskeletal organization, lipogenesis and anabolic output. In response to growth factors, mTORC2 phosphorylates and activates AGC protein kinase family members, including AKT (AKT1, AKT2 and AKT3), PKC (PRKCA, PRKCB and PRKCE) and SGK1. In contrast to mTORC1, mTORC2 is nutrient-insensitive. Within the mTORC2 complex, MAPKAP1/SIN1 acts as a substrate adapter which recognizes and binds AGC protein kinase family members for phosphorylation by MTOR. mTORC2 plays a critical role in AKT1 activation by mediating phosphorylation of different sites depending on the context, such as 'Thr-450', 'Ser-473', 'Ser-477' or 'Thr-479', facilitating the phosphorylation of the activation loop of AKT1 on 'Thr-308' by PDPK1/PDK1 which is a prerequisite for full activation. mTORC2 catalyzes the phosphorylation of SGK1 at 'Ser-422' and of PRKCA on 'Ser-657'. The mTORC2 complex also phosphorylates various proteins involved in insulin signaling, such as FBXW8 and IGF2BP1. mTORC2 acts upstream of Rho GTPases to regulate the actin cytoskeleton, probably by activating one or more Rho-type guanine nucleotide exchange factors. mTORC2 promotes the serum-induced formation of stress-fibers or F-actin. MAPKAP1 inhibits MAP3K2 by preventing its dimerization and autophosphorylation. Inhibits HRAS and KRAS independently of mTORC2 complex. Enhances osmotic stress-induced phosphorylation of ATF2 and ATF2-mediated transcription. Involved in ciliogenesis, regulates cilia length through its interaction with CCDC28B independently of mTORC2 complex. This is Target of rapamycin complex 2 subunit MAPKAP1 (MAPKAP1) from Ovis aries (Sheep).